Consider the following 39-residue polypeptide: LIM/homeobox protein xLIM-2B (39 aa).

The homeobox DNA-binding region spans 1-39; that stretch reads KAKQLETLKAAFAATPKPTRHIREQLAQETGLNMRVIQV.

Its subcellular location is the nucleus. In Xenopus laevis (African clawed frog), this protein is LIM/homeobox protein xLIM-2B (lim2b).